The sequence spans 204 residues: Dual specificity protein phosphatase 18 (204 aa).

In terms of domain architecture, Tyrosine-protein phosphatase spans 19-160 (GLSQITKSLF…LIHYEFQLFG (142 aa)). The segment at 95 to 141 (MKQGRTLLHCAAGVSRSAALCLAYLMKYHVMSLLDAHAWTKSRRPII) is sufficient for mitochondrial localization. Catalysis depends on cysteine 104, which acts as the Phosphocysteine intermediate.

Belongs to the protein-tyrosine phosphatase family. Non-receptor class dual specificity subfamily.

Its subcellular location is the cytoplasm. It localises to the nucleus. The protein localises to the mitochondrion inner membrane. It catalyses the reaction O-phospho-L-tyrosyl-[protein] + H2O = L-tyrosyl-[protein] + phosphate. The enzyme catalyses O-phospho-L-seryl-[protein] + H2O = L-seryl-[protein] + phosphate. It carries out the reaction O-phospho-L-threonyl-[protein] + H2O = L-threonyl-[protein] + phosphate. Can dephosphorylate single and diphosphorylated synthetic MAPK peptides, with preference for the phosphotyrosine and diphosphorylated forms over phosphothreonine. In vitro, dephosphorylates p-nitrophenyl phosphate (pNPP). This chain is Dual specificity protein phosphatase 18 (Dusp18), found in Rattus norvegicus (Rat).